We begin with the raw amino-acid sequence, 975 residues long: Chromosome transmission fidelity protein 18 homolog (975 aa).

2 disordered regions span residues 30–83 and 114–141; these read EGAS…KRQV and SEEMEEPPPPDSSPTDITPPPSPEDLAE. The residue at position 51 (threonine 51) is a Phosphothreonine. Low complexity predominate over residues 58–77; that stretch reads RGDAASSPAPAASVGSSQGG. Serine 64 is subject to Phosphoserine. Pro residues predominate over residues 122 to 136; it reads PPDSSPTDITPPPSP. Serine 225 is subject to Phosphoserine. Disordered stretches follow at residues 246–276 and 320–346; these read SDTLHSLRSGEEEAAQPLGAPEEEPTDGQDA and RPSRKPRPSVEPARVSKEATAPGKWKS. Residue 374–381 participates in ATP binding; that stretch reads GPPGLGKT. Residues 858–896 are disordered; it reads ASARVENSPQVDGSPPGLEGLLGGIGEKGVHRPAPRNHE. A Phosphoserine modification is found at serine 871.

Belongs to the activator 1 small subunits family. CTF18 subfamily. In terms of assembly, component of the CTF18-RFC complex, which consists of CTF18, CTF8, DCC1, RFC2, RFC3, RFC4 and RFC5. During assembly of the CTF18-RFC complex, CTF18 may first assemble into a subcomplex with RFC2, RFC3, RFC4 and RFC5. CTF18 then interacts directly with CTF8, which in turn interacts with DCC1. The CTF18-RFC complex associates with PCNA and with DNA polymerase POLH. The CTF18-RFC complex does not interact with the Rad9/Rad1/Hus1 complex. CTF18 interacts with SMC1A and RAD21. Interacts with DDX11.

It is found in the nucleus. Functionally, chromosome cohesion factor involved in sister chromatid cohesion and fidelity of chromosome transmission. Component of one of the cell nuclear antigen loader complexes, CTF18-replication factor C (CTF18-RFC), which consists of CTF18, CTF8, DCC1, RFC2, RFC3, RFC4 and RFC5. The CTF18-RFC complex binds to single-stranded and primed DNAs and has weak ATPase activity that is stimulated by the presence of primed DNA, replication protein A (RPA) and by proliferating cell nuclear antigen (PCNA). The CTF18-RFC complex catalyzes the ATP-dependent loading of PCNA onto primed and gapped DNA. Interacts with and stimulates DNA polymerase POLH. During DNA repair synthesis, involved in loading DNA polymerase POLE at the sites of local damage. This chain is Chromosome transmission fidelity protein 18 homolog (CHTF18), found in Homo sapiens (Human).